A 174-amino-acid chain; its full sequence is Peptide deformylase (174 aa).

Residues Cys94 and His136 each coordinate Fe cation. Residue Glu137 is part of the active site. His140 is a Fe cation binding site.

It belongs to the polypeptide deformylase family. Fe(2+) is required as a cofactor.

It carries out the reaction N-terminal N-formyl-L-methionyl-[peptide] + H2O = N-terminal L-methionyl-[peptide] + formate. Functionally, removes the formyl group from the N-terminal Met of newly synthesized proteins. Requires at least a dipeptide for an efficient rate of reaction. N-terminal L-methionine is a prerequisite for activity but the enzyme has broad specificity at other positions. The chain is Peptide deformylase from Rhizobium meliloti (strain 1021) (Ensifer meliloti).